The chain runs to 1537 residues: Histone-lysine N-methyltransferase, H3 lysine-79 specific (1537 aa).

The DOT1 domain maps to 16-330 (EPAVYPWPLP…ILENYFSSLK (315 aa)). S-adenosyl-L-methionine-binding positions include 136-139 (YGET), 159-168 (FVDLGSGVGQ), Glu186, and 222-223 (DF). Position 297 is a phosphoserine (Ser297). A compositionally biased stretch (basic and acidic residues) spans 334 to 350 (LREEQEAARRRQQRESK). Residues 334–467 (LREEQEAARR…SPFYQLPPSV (134 aa)) are disordered. Ser374 bears the Phosphoserine mark. Positions 391–416 (PSKARKKKLNKKGRKMAGRKRGRPKK) are required for interaction with nucleosomes and DNA. Residues 393 to 416 (KARKKKLNKKGRKMAGRKRGRPKK) show a composition bias toward basic residues. Residues 439-450 (QTVSQTAASSPQ) are compositionally biased toward polar residues. Residues Ser448 and Ser471 each carry the phosphoserine modification. Position 480 is a phosphothreonine (Thr480). A phosphoserine mark is found at Ser775 and Ser786. Disordered regions lie at residues 785–853 (LSQD…LRER), 893–912 (RAER…DPSS), 957–1128 (TPGA…LNLN), and 1145–1243 (SPET…KWKS). Residues 800–809 (LHSRAEHTKE) are compositionally biased toward basic and acidic residues. Ser826 carries the phosphoserine modification. Position 834 is a phosphoserine; by MAPK11 (Ser834). Over residues 844-853 (KSSEKGLRER) the composition is skewed to basic and acidic residues. Polar residues-rich tracts occupy residues 899-912 (STPS…DPSS), 966-986 (DESS…STPQ), and 994-1010 (PRNS…SSSP). Thr900 is subject to Phosphothreonine; by MAPK11. A Phosphoserine; by MAPK11 modification is found at Ser902. Position 984 is a phosphothreonine; by MAPK11 (Thr984). Phosphoserine is present on Ser997. 2 positions are modified to phosphoserine; by MAPK11: Ser1001 and Ser1009. The residue at position 1035 (Ser1035) is a Phosphoserine. The span at 1048-1068 (TITTGAGSAKQSPSSKHSPLT) shows a compositional bias: polar residues. Ser1093 is subject to Phosphoserine. Ser1104 is subject to Phosphoserine; by MAPK11. A compositionally biased stretch (polar residues) spans 1118–1128 (TQPSGSPLNLN). Basic and acidic residues predominate over residues 1158 to 1171 (QDHDQPPVLKKERP). The span at 1172–1184 (LSQTNGAHYSPLT) shows a compositional bias: polar residues. The segment covering 1185-1195 (SDEEPGSEDEP) has biased composition (acidic residues). Phosphoserine is present on residues Ser1213 and Ser1246. The disordered stretch occupies residues 1334–1410 (GASLPHKGPE…DKTPLLSGKA (77 aa)).

The protein belongs to the class I-like SAM-binding methyltransferase superfamily. DOT1 family. In terms of assembly, interacts with MLLT10.

The protein resides in the nucleus. It carries out the reaction L-lysyl(79)-[histone H3] + 3 S-adenosyl-L-methionine = N(6),N(6),N(6)-trimethyl-L-lysyl(79)-[histone H3] + 3 S-adenosyl-L-homocysteine + 3 H(+). In terms of biological role, histone methyltransferase. Methylates 'Lys-79' of histone H3. Nucleosomes are preferred as substrate compared to free histones. Binds to DNA. This is Histone-lysine N-methyltransferase, H3 lysine-79 specific from Homo sapiens (Human).